Reading from the N-terminus, the 581-residue chain is MAAPKLESFRRGSMFDGSFRRGSMFDGSFRQSMRDRLILQSRGYSNVNDDDKTSVRCCSYSYFSDKITGVVKKLKDVLVTAWEMGTADPRKMIFSAKMGLALTLTSILIFFKIPGLELSGHYLWAILTVVVIFEFSIGATFSKGCNRGLGTLSAGGLALGMSWISEMTGNWADVFNAASIFVVAFFATYAKLYPTMKPYEYGFRVFLLTYCYVIVSGYKTGEFMETAVSRFLLIALGASVGLIVNTCIYPIWAGEDLHNLVAKNFVNVATSLEGCVNGYLECVAYDTIPSRILVYEAVAEDPVYSGYRSAVQSTSQEDTLMSFASWEPPHGPYKSFRYPWALYVKVGGALRHCAIMVMALHGCILSEIQAAEDRRREFRNELQRVGIEGAKVLRYIGESLKKMEKLNPIEDILYEIHQAAEELQSKIDKKSYLLVNAKNWEIGNRPRVRDLTDEQKISNLDSDLSRILAHKSQSEATLRPPKNWDDVTTAANLSSATMLPYLQSRTMIHKQPSWPSRISITPGSMLQPPLGEPGKMYESASNLSLATFASLLIEFVARLENLVNAYDELSVKANFKEAVSE.

6 helical membrane passes run 98–118 (MGLALTLTSILIFFKIPGLEL), 122–142 (YLWAILTVVVIFEFSIGATFS), 148–164 (GLGTLSAGGLALGMSWI), 167–187 (MTGNWADVFNAASIFVVAFFA), 201–218 (YGFRVFLLTYCYVIVSGY), and 231–251 (FLLIALGASVGLIVNTCIYPI).

Belongs to the aromatic acid exporter (TC 2.A.85) family.

Its subcellular location is the membrane. Its function is as follows. Malate transporter. This chain is Putative aluminum-activated malate transporter 3 (ALMT3), found in Arabidopsis thaliana (Mouse-ear cress).